We begin with the raw amino-acid sequence, 295 residues long: Aquaporin-9 (295 aa).

The Cytoplasmic segment spans residues 1–24 (MPSEKDGAKKSLMQRLALKSRIAK). Residues 25–43 (ETLSEFLGTFIMIVLGCSS) traverse the membrane as a helical segment. The Extracellular portion of the chain corresponds to 44–57 (IAQAVLSRERFGGI). A helical transmembrane segment spans residues 58 to 77 (ITINIGFASAVVMALYVTFG). The Cytoplasmic segment spans residues 78 to 79 (IS). Residues 80 to 92 (GGHINPAVSFAMC) constitute an intramembrane region (discontinuously helical). The NPA 1 signature appears at 84–86 (NPA). Residues 93 to 98 (AFGRME) are Cytoplasmic-facing. Residues 99-123 (WFKFPFYVGAQFLGAFVGAATVFGI) form a helical membrane-spanning segment. The Extracellular segment spans residues 124–160 (YYDGLMAFAGGKLLVVGENATAFIFATYPAPFISTPG). A helical membrane pass occupies residues 161 to 178 (AFVDQVVSTMFLLLIVFA). Topologically, residues 179 to 190 (MFDSRNLGVPRG) are cytoplasmic. Residues 191–207 (LEPVVIGLLIIVLSCSL) form a helical membrane-spanning segment. At 208–210 (GLN) the chain is on the extracellular side. An intramembrane region (discontinuously helical) is located at residues 211–225 (SGCAMNPARDLSPRL). An NPA 2 motif is present at residues 216–218 (NPA). The Extracellular segment spans residues 226–243 (FTALAGWGFEVFTVGNNF). The helical transmembrane segment at 244-264 (WWIPVVGPMIGAFLGGLIYIL) threads the bilayer. At 265–295 (FIQMHHSKLDPDMKAEPSENNLEKHELSVIM) the chain is on the cytoplasmic side.

The protein belongs to the MIP/aquaporin (TC 1.A.8) family. Homotetramer; each monomer provides an independent glycerol/water pore. Detected in testis and liver. Detected in immature spermatocytes and in interstitial Leydig cells.

Its subcellular location is the cell membrane. The protein resides in the basolateral cell membrane. It carries out the reaction H2O(in) = H2O(out). The enzyme catalyses glycerol(in) = glycerol(out). It catalyses the reaction urea(in) = urea(out). The catalysed reaction is (S)-lactate(in) = (S)-lactate(out). It carries out the reaction NH4(+)(in) = NH4(+)(out). The enzyme catalyses uracil(in) = uracil(out). It catalyses the reaction adenine(out) = adenine(in). The catalysed reaction is 3-hydroxybutanoate(in) = 3-hydroxybutanoate(out). It carries out the reaction D-sorbitol(in) = D-sorbitol(out). The enzyme catalyses D-mannitol(in) = D-mannitol(out). It catalyses the reaction H2O2(out) = H2O2(in). The catalysed reaction is arsenite(in) = arsenite(out). It carries out the reaction selenite(in) = selenite(out). Its activity is regulated as follows. Channel activity is inhibited by mercury ions and phloretin. In terms of biological role, aquaglyceroporins form homotetrameric transmembrane channels, with each monomer independently mediating glycerol and water transport across the plasma membrane along their osmotic gradient. AQP9 is the primary route for glycerol uptake in hepatocytes, supporting hepatic gluconeogenesis. It exhibits broad specificity and may transport various small, non-charged solutes, including carbamides, polyols, purines, and pyrimidines. AQP9 may also facilitate hepatic urea extrusion. Due to its permeability to lactate, AQP9 might participate in the astrocyte-to-neuron lactate shuttle, supplying neurons with energy. Additionally, AQP9 is permeable to arsenite, contributing to arsenic excretion by the liver and providing partial protection against arsenic toxicity. It is also permeable to H2O2 in vivo. Could also be permeable to ammonium. The protein is Aquaporin-9 of Rattus norvegicus (Rat).